Reading from the N-terminus, the 182-residue chain is Ribulose bisphosphate carboxylase small subunit, chloroplastic 3 (182 aa).

A chloroplast-targeting transit peptide spans 1–41 (MASIMMNKSVVLSKECAKPLASPKVTLNKRGFATTIATKNR).

It belongs to the RuBisCO small chain family. In terms of assembly, heterohexadecamer of 8 large and 8 small subunits.

It localises to the plastid. The protein localises to the chloroplast. RuBisCO catalyzes two reactions: the carboxylation of D-ribulose 1,5-bisphosphate, the primary event in carbon dioxide fixation, as well as the oxidative fragmentation of the pentose substrate. Both reactions occur simultaneously and in competition at the same active site. Although the small subunit is not catalytic it is essential for maximal activity. The sequence is that of Ribulose bisphosphate carboxylase small subunit, chloroplastic 3 from Acetabularia acetabulum (Mermaid's wine glass).